The primary structure comprises 644 residues: Magnetosome protein MamZ (644 aa).

Positions 1–427 (MPRNAEAPAK…YAAWLLANGI (427 aa)) are major facilitator domain. Helical transmembrane passes span 22-42 (WNII…SISI), 63-83 (ADIQ…FGLL), 92-112 (IIAL…LSLQ), 113-133 (VGLA…VLLT), 159-179 (LMGN…AIVM), 185-205 (PGGV…GFQL), 254-274 (VIIL…LVGV), 281-301 (AHAA…VPLW), 311-331 (ISAI…LGMF), 337-357 (WLVA…FVTL), 369-389 (ILGA…VMLV), 403-423 (APFI…AWLL), 440-460 (TVDW…WLVG), 478-498 (VGFV…ISLA), 518-538 (IGLF…ALEW), 553-573 (PFIL…FTSA), 588-608 (LHSA…LAAN), and 612-629 (GEPY…WYRF). The interval 488–599 (WAFTFLIISL…SATYVINALV (112 aa)) is ferric reductase-like domain.

This sequence in the N-terminal section; belongs to the major facilitator superfamily.

The protein resides in the magnetosome membrane. Its function is as follows. Required for correct biomineralization of the magnetosome; probably converts and then transports some form of iron. It is partially functionally redundant with MamH. May function with MamX, MamY amd Mms6. The protein is Magnetosome protein MamZ of Paramagnetospirillum magneticum (strain ATCC 700264 / AMB-1) (Magnetospirillum magneticum).